A 554-amino-acid chain; its full sequence is Eukaryotic translation initiation factor 3 subunit D-2 (554 aa).

The RNA gate stretch occupies residues 291–305; that stretch reads QFDLLTVNETALEPP. Residues 530 to 554 are disordered; it reads NAFDSDGNEDEETSEDRPFLKSMAN.

This sequence belongs to the eIF-3 subunit D family. Component of the eukaryotic translation initiation factor 3 (eIF-3) complex. The eIF-3 complex interacts with pix.

It localises to the cytoplasm. In terms of biological role, mRNA cap-binding component of the eukaryotic translation initiation factor 3 (eIF-3) complex, which is involved in protein synthesis of a specialized repertoire of mRNAs and, together with other initiation factors, stimulates binding of mRNA and methionyl-tRNAi to the 40S ribosome. The eIF-3 complex specifically targets and initiates translation of a subset of mRNAs involved in cell proliferation. In the eIF-3 complex, eif3d specifically recognizes and binds the 7-methylguanosine cap of a subset of mRNAs. In Drosophila mojavensis (Fruit fly), this protein is Eukaryotic translation initiation factor 3 subunit D-2.